Reading from the N-terminus, the 257-residue chain is Snake venom serine protease 2C (257 aa).

Residues 1 to 18 (MVLIRVLANLLILQLSYA) form the signal peptide. The propeptide occupies 19-24 (QKSSEL). One can recognise a Peptidase S1 domain in the interval 25–248 (VIGGHPCNIN…HLDWIKSIIA (224 aa)). Disulfide bonds link C31–C162, C49–C65, C97–C255, C141–C209, C173–C188, and C199–C224. Active-site charge relay system residues include H64 and D109. N-linked (GlcNAc...) asparagine glycosylation is found at N116, N120, and N121. Catalysis depends on S203, which acts as the Charge relay system.

Belongs to the peptidase S1 family. Snake venom subfamily. In terms of assembly, monomer. In terms of tissue distribution, expressed by the venom gland.

The protein resides in the secreted. Its function is as follows. Snake venom serine protease that may act in the hemostasis system of the prey. The protein is Snake venom serine protease 2C (TLG2C) of Craspedocephalus gramineus (Bamboo pit viper).